Reading from the N-terminus, the 195-residue chain is Myelin-associated neurite-outgrowth inhibitor (195 aa).

Topologically, residues 1–18 are cytoplasmic; sequence MNPVYSPASSGVPYANPK. Residues 19 to 43 form a helical membrane-spanning segment; that stretch reads GIGYPAGFPVGYAAAAPAYSPSMYP. The Extracellular segment spans residues 44 to 143; the sequence is GANPAFPSGY…APPIPPPRPN (100 aa). Residues 144–163 form a helical membrane-spanning segment; that stretch reads GVTMGMVGGTTMAMSAGTLL. Over 164-195 the chain is Cytoplasmic; the sequence is TTHSPTPVAPHPSMPTYRQPATPTYSYVPPQW.

Belongs to the FAM168 family.

Its subcellular location is the cytoplasm. It localises to the perinuclear region. It is found in the cell membrane. The protein resides in the cell projection. The protein localises to the axon. Its function is as follows. Inhibitor of neuronal axonal outgrowth. In Danio rerio (Zebrafish), this protein is Myelin-associated neurite-outgrowth inhibitor (fam168b).